We begin with the raw amino-acid sequence, 210 residues long: Probable GTP-binding protein EngB (210 aa).

Positions 25 to 199 (TGIEVAFAGR…RQKLDSWFNE (175 aa)) constitute an EngB-type G domain. Residues 33–40 (GRSNAGKS), 60–64 (GRTQL), 78–81 (DLPG), 145–148 (TKAD), and 178–180 (FSS) each bind GTP. Mg(2+) contacts are provided by S40 and T62.

This sequence belongs to the TRAFAC class TrmE-Era-EngA-EngB-Septin-like GTPase superfamily. EngB GTPase family. Requires Mg(2+) as cofactor.

Functionally, necessary for normal cell division and for the maintenance of normal septation. This is Probable GTP-binding protein EngB from Klebsiella pneumoniae subsp. pneumoniae (strain ATCC 700721 / MGH 78578).